Here is a 404-residue protein sequence, read N- to C-terminus: Formate-dependent phosphoribosylglycinamide formyltransferase (404 aa).

Residues 25 to 26 and Glu85 contribute to the N(1)-(5-phospho-beta-D-ribosyl)glycinamide site; that span reads EL. ATP contacts are provided by residues Arg118, Lys159, 164–169, 199–202, and Glu207; these read SSGKGQ and EGFI. The ATP-grasp domain maps to 123-318; sequence RLAAEELGLP…EFELHARAIL (196 aa). Mg(2+) is bound by residues Glu277 and Glu289. Residues Asp296, Lys365, and 372 to 373 each bind N(1)-(5-phospho-beta-D-ribosyl)glycinamide; that span reads RR. A disordered region spans residues 384 to 404; it reads TDEARSRAKQAAAAVRPVSAK. Over residues 392-404 the composition is skewed to low complexity; sequence KQAAAAVRPVSAK.

It belongs to the PurK/PurT family. In terms of assembly, homodimer.

It carries out the reaction N(1)-(5-phospho-beta-D-ribosyl)glycinamide + formate + ATP = N(2)-formyl-N(1)-(5-phospho-beta-D-ribosyl)glycinamide + ADP + phosphate + H(+). It functions in the pathway purine metabolism; IMP biosynthesis via de novo pathway; N(2)-formyl-N(1)-(5-phospho-D-ribosyl)glycinamide from N(1)-(5-phospho-D-ribosyl)glycinamide (formate route): step 1/1. In terms of biological role, involved in the de novo purine biosynthesis. Catalyzes the transfer of formate to 5-phospho-ribosyl-glycinamide (GAR), producing 5-phospho-ribosyl-N-formylglycinamide (FGAR). Formate is provided by PurU via hydrolysis of 10-formyl-tetrahydrofolate. The chain is Formate-dependent phosphoribosylglycinamide formyltransferase from Paraburkholderia xenovorans (strain LB400).